Reading from the N-terminus, the 385-residue chain is Flap endonuclease 1 (385 aa).

The segment at 1-104 is N-domain; the sequence is MGILGLSKLI…GELAKRAERR (104 aa). D34 contributes to the Mg(2+) binding site. DNA-binding residues include R47 and R70. Residues D86, E158, E160, D179, and D181 each coordinate Mg(2+). The tract at residues 122–253 is I-domain; sequence GIEKFNRRLV…KRAIELINTY (132 aa). E158 is a binding site for DNA. Positions 231 and 233 each coordinate DNA. A Mg(2+)-binding site is contributed by D233. The interaction with PCNA stretch occupies residues 336-344; the sequence is TQVRLDSFF. Residues 346-385 form a disordered region; sequence TLPSTPNATNAAKRKADEAKKSANNKKAKTSGGGRGRRPK. Over residues 368–385 the composition is skewed to basic residues; the sequence is ANNKKAKTSGGGRGRRPK.

This sequence belongs to the XPG/RAD2 endonuclease family. FEN1 subfamily. As to quaternary structure, interacts with PCNA. Three molecules of FEN1 bind to one PCNA trimer with each molecule binding to one PCNA monomer. PCNA stimulates the nuclease activity without altering cleavage specificity. Mg(2+) is required as a cofactor. In terms of processing, phosphorylated. Phosphorylation upon DNA damage induces relocalization to the nuclear plasma.

The protein localises to the nucleus. Its subcellular location is the nucleolus. It localises to the nucleoplasm. It is found in the mitochondrion. Functionally, structure-specific nuclease with 5'-flap endonuclease and 5'-3' exonuclease activities involved in DNA replication and repair. During DNA replication, cleaves the 5'-overhanging flap structure that is generated by displacement synthesis when DNA polymerase encounters the 5'-end of a downstream Okazaki fragment. It enters the flap from the 5'-end and then tracks to cleave the flap base, leaving a nick for ligation. Also involved in the long patch base excision repair (LP-BER) pathway, by cleaving within the apurinic/apyrimidinic (AP) site-terminated flap. Acts as a genome stabilization factor that prevents flaps from equilibrating into structures that lead to duplications and deletions. Also possesses 5'-3' exonuclease activity on nicked or gapped double-stranded DNA, and exhibits RNase H activity. Also involved in replication and repair of rDNA and in repairing mitochondrial DNA. This Drosophila sechellia (Fruit fly) protein is Flap endonuclease 1.